Consider the following 337-residue polypeptide: Pyridoxal 5'-phosphate synthase subunit PdxS (337 aa).

D65 lines the D-ribose 5-phosphate pocket. The active-site Schiff-base intermediate with D-ribose 5-phosphate is K122. G194 lines the D-ribose 5-phosphate pocket. Residue K206 coordinates D-glyceraldehyde 3-phosphate. Residues G255 and 276–277 each bind D-ribose 5-phosphate; that span reads GS.

Belongs to the PdxS/SNZ family. As to quaternary structure, in the presence of PdxT, forms a dodecamer of heterodimers.

The catalysed reaction is aldehydo-D-ribose 5-phosphate + D-glyceraldehyde 3-phosphate + L-glutamine = pyridoxal 5'-phosphate + L-glutamate + phosphate + 3 H2O + H(+). It functions in the pathway cofactor biosynthesis; pyridoxal 5'-phosphate biosynthesis. Catalyzes the formation of pyridoxal 5'-phosphate from ribose 5-phosphate (RBP), glyceraldehyde 3-phosphate (G3P) and ammonia. The ammonia is provided by the PdxT subunit. Can also use ribulose 5-phosphate and dihydroxyacetone phosphate as substrates, resulting from enzyme-catalyzed isomerization of RBP and G3P, respectively. In Metallosphaera sedula (strain ATCC 51363 / DSM 5348 / JCM 9185 / NBRC 15509 / TH2), this protein is Pyridoxal 5'-phosphate synthase subunit PdxS.